We begin with the raw amino-acid sequence, 253 residues long: Lys-63-specific deubiquitinase BRCC36 (253 aa).

The region spanning 9–145 (VELQTDVYMV…KEHEIFLNCF (137 aa)) is the MPN domain. The Zn(2+) site is built by His-94, His-96, and Asp-107. The short motif at 94 to 107 (HSHPHITVCPSHVD) is the JAMM motif element. Positions 227 to 249 (EKRIALNKLRATHLQRQLQELQK) form a coiled coil.

It belongs to the peptidase M67A family. BRCC36 subfamily. Component of the BRISC complex, at least composed of ABRAXAS2, BRCC3/BRCC36, BABAM2 and BABAM1/NBA1. Within the complex, interacts directly with ABRAXAS2. The heterodimer with ABRAXAS2 assembles into a heterotetramer. The BRISC complex binds polyubiquitin. Zn(2+) is required as a cofactor.

Its subcellular location is the cytoplasm. It localises to the nucleus. It is found in the cytoskeleton. The protein localises to the spindle pole. Its function is as follows. Metalloprotease that specifically cleaves 'Lys-63'-linked polyubiquitin chains, leaving the last ubiquitin chain attached to its substrates. Catalytic subunit of the BRISC complex; does not have activity by itself, but needs to be associated into a heterotetramer with ABRAXAS2 for minimal in vitro activity. Plays a role in regulating the onset of apoptosis via its role in modulating 'Lys-63'-linked ubiquitination of target proteins. Required for normal mitotic spindle assembly and microtubule attachment to kinetochores via its role in deubiquitinating spindle assembly factors. This chain is Lys-63-specific deubiquitinase BRCC36, found in Camponotus floridanus (Florida carpenter ant).